The sequence spans 380 residues: Acyl-lipid (9+3)-(E)-desaturase (380 aa).

The tract at residues 1–25 is disordered; that stretch reads MGAGGCISVSETKPNQKNSLERAPY. Positions 9–18 are enriched in polar residues; sequence VSETKPNQKN. 2 helical membrane-spanning segments follow: residues 52-72 and 81-101; these read LSYV…TTYF and ALAW…VWVI. The short motif at 103–107 is the Histidine box-1 element; that stretch reads HECGH. The Histidine box-2 signature appears at 139–143; sequence HRRHH. 3 consecutive transmembrane segments (helical) span residues 177-197, 223-243, and 247-267; these read IGVL…FNVS, IYLS…AAMV, and VWLI…LVLV. The short motif at 313–317 is the Histidine box-3 element; the sequence is HIVHH.

This sequence belongs to the fatty acid desaturase type 1 family.

The protein localises to the membrane. It carries out the reaction a (9Z)-octadecenoyl-containing glycerolipid + 2 Fe(II)-[cytochrome b5] + O2 + 2 H(+) = a (9Z,12E)-octadecadienoyl-containing glycerolipid + 2 Fe(III)-[cytochrome b5] + 2 H2O. The catalysed reaction is a (9Z)-hexadecenoyl-containing glycerolipid + 2 Fe(II)-[cytochrome b5] + O2 + 2 H(+) = a (9Z,12E)-hexadecadienoyl-containing glycerolipid + 2 Fe(III)-[cytochrome b5] + 2 H2O. Its function is as follows. Involved in the biosynthesis of dimorphecolic acid (9-OH-18:2(10E,12E)). Converts oleic acid (18:1(9Z)) into 18:2(9Z,12E) and probably palmitoleic acid (16:1(9Z)) into 16:2(9Z,12E). Very limited ability to catalyze (Z)-delta(12) desaturation. This chain is Acyl-lipid (9+3)-(E)-desaturase, found in Dimorphotheca sinuata (African daisy).